The following is a 213-amino-acid chain: CDP-diacylglycerol--inositol 3-phosphatidyltransferase (213 aa).

Topologically, residues 1 to 5 (MPEEN) are cytoplasmic. A helical transmembrane segment spans residues 6–26 (IFLFVPNLIGYARIVFAIISF). Y27 is a topological domain (lumenal). A helical transmembrane segment spans residues 28 to 48 (FMPCCPFTASSFYLLSGLLDA). Mg(2+) contacts are provided by D47 and D50. Topologically, residues 49-73 (FDGHAARALNQGTRFGAMLDMLTDR) are cytoplasmic. Residues G51, R55, and T61 each contribute to the a CDP-1,2-diacyl-sn-glycerol site. Positions 68 and 72 each coordinate Mg(2+). D72 serves as the catalytic Proton acceptor. The chain crosses the membrane as a helical span at residues 74 to 94 (CATMCLLVNLALLYPRATLLF). Q95 is a topological domain (lumenal). The helical transmembrane segment at 96-116 (LSMSLDVASHWLHLHSSVVRG) threads the bilayer. The Cytoplasmic segment spans residues 117 to 139 (SESHKMIDLSGNPVLRIYYTSRP). Residues 140–160 (ALFTLCAGNELFYCLLYLFNF) form a helical membrane-spanning segment. At 161–174 (SEGPLVGSVGLFRM) the chain is on the lumenal side. A helical membrane pass occupies residues 175 to 195 (GLWVTAPIALLKSVISVIHLI). Over 196 to 213 (TAARNMAALDAADRAKKK) the chain is Cytoplasmic.

This sequence belongs to the CDP-alcohol phosphatidyltransferase class-I family. The cofactor is Mn(2+). Requires Mg(2+) as cofactor.

It localises to the endoplasmic reticulum membrane. It is found in the cell membrane. It carries out the reaction a CDP-1,2-diacyl-sn-glycerol + myo-inositol = a 1,2-diacyl-sn-glycero-3-phospho-(1D-myo-inositol) + CMP + H(+). Its function is as follows. Catalyzes the biosynthesis of phosphatidylinositol (PtdIns) as well as PtdIns:inositol exchange reaction. May thus act to reduce an excessive cellular PtdIns content. The exchange activity is due to the reverse reaction of PtdIns synthase and is dependent on CMP, which is tightly bound to the enzyme. The protein is CDP-diacylglycerol--inositol 3-phosphatidyltransferase of Mus musculus (Mouse).